The chain runs to 2172 residues: DExH-box ATP-dependent RNA helicase DExH13 (2172 aa).

The segment at tyrosine 20–aspartate 83 is disordered. Residues serine 30–asparagine 73 show a composition bias toward basic and acidic residues. The region spanning glycine 515 to leucine 698 is the Helicase ATP-binding 1 domain. Alanine 528 to threonine 535 provides a ligand contact to ATP. The short motif at aspartate 640–histidine 643 is the DEIH box element. The 205-residue stretch at glycine 742–glycine 946 folds into the Helicase C-terminal 1 domain. In terms of domain architecture, SEC63 1 spans threonine 1007–proline 1308. Residues threonine 1361–phenylalanine 1538 enclose the Helicase ATP-binding 2 domain. Residue alanine 1374 to threonine 1381 coordinates ATP. A DELH box motif is present at residues aspartate 1480 to histidine 1483. Residues alanine 1575 to valine 1772 enclose the Helicase C-terminal 2 domain. An SEC63 2 domain is found at proline 1840–phenylalanine 2157.

It localises to the nucleus. It carries out the reaction ATP + H2O = ADP + phosphate + H(+). In terms of biological role, RNA helicase that plays an essential role in pre-mRNA splicing as component of the U5 snRNP and U4/U6-U5 tri-snRNP complexes. Involved in spliceosome assembly, activation and disassembly. The chain is DExH-box ATP-dependent RNA helicase DExH13 from Arabidopsis thaliana (Mouse-ear cress).